The sequence spans 303 residues: MSEPQPDLEPPQHGLYMLFLLVLVFFLMGLVGFMICHVLKKKGYRCRTSRGSEPDDAQLQPPEDDDVNEDTVERIVRCIIQNEANAEALKEMLGDSEGEGTVQLSSVDATSSLQDGAPSHHHTVHLGSAAPCIHCSRSKRPPLVRQGRSKEGKSRPRPGETTVFSVGRFRVTHIEKRYGLHEHRDGSPTDRSWGSGGGQEPGGSQAAGGGQPRTGTAAIERLLPEPPPSQAAATHSVQNGRLQDASLVPCTLEGTPGTSAELNLGPRGRDPSPGLSSQEANGQPTKLDTSGQQESLPPEAGGM.

A helical membrane pass occupies residues 15–35 (LYMLFLLVLVFFLMGLVGFMI). Disordered regions lie at residues 47-68 (RTSR…DDVN), 135-214 (CSRS…QPRT), and 249-303 (PCTL…AGGM). Phosphoserine is present on Ser-52. Composition is skewed to basic and acidic residues over residues 148 to 158 (RSKEGKSRPRP) and 172 to 188 (THIE…DGSP). A compositionally biased stretch (gly residues) spans 194–212 (GSGGGQEPGGSQAAGGGQP). A compositionally biased stretch (polar residues) spans 274–295 (GLSSQEANGQPTKLDTSGQQES).

Belongs to the RELT family. In terms of assembly, interacts with RELT, RELL1, OXSR1, PLSCR1 and TRAF2.

The protein resides in the cell membrane. Functionally, induces activation of MAPK14/p38 cascade, when overexpressed. Induces apoptosis, when overexpressed. This chain is RELT-like protein 2 (Rell2), found in Mus musculus (Mouse).